A 127-amino-acid chain; its full sequence is Ribonuclease P protein component 1 (127 aa).

It belongs to the eukaryotic/archaeal RNase P protein component 1 family. In terms of assembly, consists of a catalytic RNA component and at least 4-5 protein subunits.

It is found in the cytoplasm. The enzyme catalyses Endonucleolytic cleavage of RNA, removing 5'-extranucleotides from tRNA precursor.. Functionally, part of ribonuclease P, a protein complex that generates mature tRNA molecules by cleaving their 5'-ends. The chain is Ribonuclease P protein component 1 from Pyrococcus abyssi (strain GE5 / Orsay).